The primary structure comprises 192 residues: Dynein axonemal light chain 1 (192 aa).

LRR repeat units lie at residues 49–70, 71–92, 94–115, and 116–137; these read NCEKLSLSTNCIEKIANLNGLK, YLKILSLGRNNIKNLNGLEAVG, TLEELWISYNLIEKLKGIHVMK, and KLKVLYMSNNLVKDWAEFSKLG. Residues 150–192 form the LRRCT domain; sequence NPLEEKHTAEGNWMEEAVKRLPKLKKLDGNPVIKQEEEEGDES.

It belongs to the dynein light chain LC1-type family. Interacts with DNAH5, a outer arm dynein heavy chain. Interacts with tubulin located within the A-tubule of the outer doublets in a ATP-independent manner.

It localises to the cytoplasm. The protein localises to the cytoskeleton. Its subcellular location is the cilium axoneme. Its function is as follows. Part of the multisubunit axonemal ATPase complexes that generate the force for cilia motility and govern beat frequency. Component of the outer arm dynein (ODA). May be involved in a mechanosensory feedback mechanism controlling ODA activity based on external conformational cues by tethering the outer arm dynein heavy chain (DNAH5) to the microtubule within the axoneme. In Xenopus laevis (African clawed frog), this protein is Dynein axonemal light chain 1 (dnal1).